Reading from the N-terminus, the 471-residue chain is ATP synthase subunit beta (471 aa).

An ATP-binding site is contributed by 153 to 160 (GGAGVGKT).

This sequence belongs to the ATPase alpha/beta chains family. In terms of assembly, F-type ATPases have 2 components, CF(1) - the catalytic core - and CF(0) - the membrane proton channel. CF(1) has five subunits: alpha(3), beta(3), gamma(1), delta(1), epsilon(1). CF(0) has four main subunits: a(1), b(1), b'(1) and c(9-12).

The protein resides in the cell membrane. The enzyme catalyses ATP + H2O + 4 H(+)(in) = ADP + phosphate + 5 H(+)(out). Its function is as follows. Produces ATP from ADP in the presence of a proton gradient across the membrane. The catalytic sites are hosted primarily by the beta subunits. The protein is ATP synthase subunit beta of Roseiflexus castenholzii (strain DSM 13941 / HLO8).